The primary structure comprises 632 residues: ATP-dependent RNA helicase mrh4, mitochondrial (632 aa).

A mitochondrion-targeting transit peptide spans 1 to 37 (MNRLGRMSLPLRSPACLICQTRTTTLIPSSWQTARSM). A disordered region spans residues 49 to 111 (MALSPDVAKP…KEEAQKKESP (63 aa)). Positions 97–111 (RSGDSKEEAQKKESP) are enriched in basic and acidic residues. Positions 141 to 174 (TSFDQFPLLPVVRNSIVSQALPGLMEVTPTPIQR) match the Q motif motif. The Helicase ATP-binding domain occupies 194–406 (DDDEPHYDQF…RKRYPDIKRL (213 aa)). Position 207-214 (207-214 (AETGSGKT)) interacts with ATP. The DEAD box signature appears at 353–356 (DEAD). The 173-residue stretch at 460 to 632 (FLEPKTKKIL…EGMFRGQALI (173 aa)) folds into the Helicase C-terminal domain.

The protein belongs to the DEAD box helicase family. MRH4 subfamily.

The protein localises to the mitochondrion. The catalysed reaction is ATP + H2O = ADP + phosphate + H(+). In terms of biological role, ATP-binding RNA helicase involved in mitochondrial RNA metabolism. Required for maintenance of mitochondrial DNA. The chain is ATP-dependent RNA helicase mrh4, mitochondrial (mrh4) from Aspergillus clavatus (strain ATCC 1007 / CBS 513.65 / DSM 816 / NCTC 3887 / NRRL 1 / QM 1276 / 107).